Consider the following 433-residue polypeptide: Pyrimidine-nucleoside phosphorylase (433 aa).

81-83 (KHS) lines the phosphate pocket. K(+) is bound by residues Gly88 and Thr90. Phosphate contacts are provided by residues Thr92, 108–110 (KMS), and Thr120. Arg168 and Lys187 together coordinate substrate. Residues Leu243, Ala246, and Glu255 each coordinate K(+).

The protein belongs to the thymidine/pyrimidine-nucleoside phosphorylase family. As to quaternary structure, homodimer. It depends on K(+) as a cofactor.

It catalyses the reaction uridine + phosphate = alpha-D-ribose 1-phosphate + uracil. The catalysed reaction is thymidine + phosphate = 2-deoxy-alpha-D-ribose 1-phosphate + thymine. The enzyme catalyses 2'-deoxyuridine + phosphate = 2-deoxy-alpha-D-ribose 1-phosphate + uracil. Catalyzes phosphorolysis of the pyrimidine nucleosides uridine, thymidine and 2'-deoxyuridine with the formation of the corresponding pyrimidine base and ribose-1-phosphate. This chain is Pyrimidine-nucleoside phosphorylase (pdp), found in Geobacillus stearothermophilus (Bacillus stearothermophilus).